Reading from the N-terminus, the 154-residue chain is uncharacterized protein (154 aa).

The 143-residue stretch at 1 to 143 folds into the HTH marR-type domain; the sequence is MTESERALLT…LRKLAGSLTK (143 aa). The segment at residues 57–80 is a DNA-binding region (H-T-H motif); it reads LSKLAMSLDLKPASVTRMTDILYK.

This is an uncharacterized protein from Bacillus subtilis (strain 168).